A 132-amino-acid polypeptide reads, in one-letter code: Large ribosomal subunit protein uL14 (132 aa).

This sequence belongs to the universal ribosomal protein uL14 family. In terms of assembly, part of the 50S ribosomal subunit. Forms a cluster with proteins L3 and L24e, part of which may contact the 16S rRNA in 2 intersubunit bridges.

Its function is as follows. Binds to 23S rRNA. Forms part of two intersubunit bridges in the 70S ribosome. The chain is Large ribosomal subunit protein uL14 from Methanosarcina barkeri (strain Fusaro / DSM 804).